Reading from the N-terminus, the 309-residue chain is Mannitol-1-phosphatase (309 aa).

Histidine 82 serves as the catalytic Tele-phosphohistidine intermediate. Glutamate 166 acts as the Proton donor/acceptor in catalysis.

Belongs to the phosphoglycerate mutase family.

The enzyme catalyses D-mannitol 1-phosphate + H2O = D-mannitol + phosphate. Its activity is regulated as follows. By diethyl pyrocarbonate (DEPC). In terms of biological role, key enzyme for mannitol biosynthesis. The chain is Mannitol-1-phosphatase from Eimeria tenella (Coccidian parasite).